Here is a 543-residue protein sequence, read N- to C-terminus: ADIPOR-like receptor IZH3 (543 aa).

The Lumenal portion of the chain corresponds to 1–259 (MMDSSSKSLT…NWYGWHNETS (259 aa)). 4 N-linked (GlcNAc...) asparagine glycosylation sites follow: Asn45, Asn123, Asn153, and Asn256. Residues 260–280 (NIWSHLLGAIYIIYLAIYDFP) form a helical membrane-spanning segment. Residues 281–295 (QSEVWRNSQVPPQAR) lie on the Cytoplasmic side of the membrane. Residues 296–316 (WIVFMFLAAALKCMLSSVFWH) form a helical membrane-spanning segment. Residues 317–330 (TFNGTSFLKLRSKF) lie on the Lumenal side of the membrane. Asn319 carries an N-linked (GlcNAc...) asparagine glycan. The chain crosses the membrane as a helical span at residues 331–353 (ACVDYSGITILITASILTTEFVT). The Cytoplasmic segment spans residues 354 to 357 (MYSC). The chain crosses the membrane as a helical span at residues 358 to 378 (YWAMYTYMSISLALGVFGVFM). Topologically, residues 379–395 (NWSPRFDRPEARPLRIR) are lumenal. Residues 396 to 416 (FFILLATMGVLSFLHLIFLTD) traverse the membrane as a helical segment. Residues 417–425 (LHYAATLFS) are Cytoplasmic-facing. Residues 426-446 (PVTYKSVVWYLVGVVFYGSFI) form a helical membrane-spanning segment. Residues 447-505 (PERFRSDVQVDKTIPTNYELSTDLEIITKQREIHFREVPTAHSKCSSCPSHAKSFKSLW) lie on the Lumenal side of the membrane. Residues 506 to 526 (WVDYFGCSHTFWHFFVVLGVI) form a helical membrane-spanning segment. The Cytoplasmic segment spans residues 527–543 (GHYRAILDMFAKRWILS).

This sequence belongs to the ADIPOR family.

The protein resides in the endoplasmic reticulum membrane. Functionally, ADIPOR-like receptor involved in zinc metabolism either by altering membrane sterol content or by directly altering cellular zinc levels. This chain is ADIPOR-like receptor IZH3 (IZH3), found in Saccharomyces cerevisiae (strain ATCC 204508 / S288c) (Baker's yeast).